A 307-amino-acid chain; its full sequence is Transaldolase (307 aa).

Catalysis depends on K125, which acts as the Schiff-base intermediate with substrate.

It belongs to the transaldolase family. Type 1 subfamily. Homodimer.

The protein resides in the cytoplasm. It carries out the reaction D-sedoheptulose 7-phosphate + D-glyceraldehyde 3-phosphate = D-erythrose 4-phosphate + beta-D-fructose 6-phosphate. Its pathway is carbohydrate degradation; pentose phosphate pathway; D-glyceraldehyde 3-phosphate and beta-D-fructose 6-phosphate from D-ribose 5-phosphate and D-xylulose 5-phosphate (non-oxidative stage): step 2/3. Its function is as follows. Transaldolase is important for the balance of metabolites in the pentose-phosphate pathway. The chain is Transaldolase from Pseudomonas paraeruginosa (strain DSM 24068 / PA7) (Pseudomonas aeruginosa (strain PA7)).